The chain runs to 390 residues: Endonuclease 8-like 1 (390 aa).

The Schiff-base intermediate with DNA role is filled by proline 2. Residue glutamate 3 is the Proton donor of the active site. Catalysis depends on lysine 54, which acts as the Proton donor; for beta-elimination activity. A DNA-binding site is contributed by asparagine 176. The disordered stretch occupies residues 278–390 (TIWFQGDPGP…SLEPEGTSAS (113 aa)). A compositionally biased stretch (basic residues) spans 291-301 (KGRKSRKKKSK). Positions 335–347 (TATQRPEGTSLQQ) are enriched in polar residues. A DNA-binding site is contributed by arginine 339. Arginine 339 (proton donor; for delta-elimination activity) is an active-site residue.

The protein belongs to the FPG family. In terms of tissue distribution, ubiquitous.

It localises to the cytoplasm. The protein localises to the cytoskeleton. It is found in the microtubule organizing center. Its subcellular location is the centrosome. The protein resides in the nucleus. It localises to the chromosome. It carries out the reaction 2'-deoxyribonucleotide-(2'-deoxyribose 5'-phosphate)-2'-deoxyribonucleotide-DNA = a 3'-end 2'-deoxyribonucleotide-(2,3-dehydro-2,3-deoxyribose 5'-phosphate)-DNA + a 5'-end 5'-phospho-2'-deoxyribonucleoside-DNA + H(+). Functionally, involved in base excision repair of DNA damaged by oxidation or by mutagenic agents. Acts as a DNA glycosylase that recognizes and removes damaged bases. Has a preference for oxidized pyrimidines, such as thymine glycol, formamidopyrimidine (Fapy) and 5-hydroxyuracil. Has marginal activity towards 8-oxoguanine. Has AP (apurinic/apyrimidinic) lyase activity and introduces nicks in the DNA strand. Cleaves the DNA backbone by beta-delta elimination to generate a single-strand break at the site of the removed base with both 3'- and 5'-phosphates. Has DNA glycosylase/lyase activity towards mismatched uracil and thymine, in particular in U:C and T:C mismatches. Specifically binds 5-hydroxymethylcytosine (5hmC), suggesting that it acts as a specific reader of 5hmC. The polypeptide is Endonuclease 8-like 1 (NEIL1) (Homo sapiens (Human)).